Consider the following 511-residue polypeptide: D-alanine--D-alanyl carrier protein ligase (511 aa).

An ATP-binding site is contributed by 152 to 153; sequence TS. Residue D199 participates in D-alanine binding. An ATP-binding site is contributed by 294-299; the sequence is NAYGPT. V303 provides a ligand contact to D-alanine. ATP is bound by residues D385, 397–400, and K499; that span reads YGGR. A D-alanine-binding site is contributed by K499.

The protein belongs to the ATP-dependent AMP-binding enzyme family. DltA subfamily.

The protein resides in the cytoplasm. It catalyses the reaction holo-[D-alanyl-carrier protein] + D-alanine + ATP = D-alanyl-[D-alanyl-carrier protein] + AMP + diphosphate. It functions in the pathway cell wall biogenesis; lipoteichoic acid biosynthesis. Functionally, catalyzes the first step in the D-alanylation of lipoteichoic acid (LTA), the activation of D-alanine and its transfer onto the D-alanyl carrier protein (Dcp) DltC. In an ATP-dependent two-step reaction, forms a high energy D-alanyl-AMP intermediate, followed by transfer of the D-alanyl residue as a thiol ester to the phosphopantheinyl prosthetic group of the Dcp. D-alanylation of LTA plays an important role in modulating the properties of the cell wall in Gram-positive bacteria, influencing the net charge of the cell wall. This is D-alanine--D-alanyl carrier protein ligase from Streptococcus agalactiae serotype V (strain ATCC BAA-611 / 2603 V/R).